The primary structure comprises 152 residues: Nucleoside diphosphate kinase A 2 (152 aa).

Positions 12, 60, 88, 94, 105, and 115 each coordinate ATP. The active-site Pros-phosphohistidine intermediate is His-118.

This sequence belongs to the NDK family. As to quaternary structure, homohexamer. Mg(2+) is required as a cofactor. In terms of processing, the N-terminus is blocked.

The protein resides in the cytoplasm. Its subcellular location is the cell membrane. It is found in the nucleus. The enzyme catalyses a 2'-deoxyribonucleoside 5'-diphosphate + ATP = a 2'-deoxyribonucleoside 5'-triphosphate + ADP. It catalyses the reaction a ribonucleoside 5'-diphosphate + ATP = a ribonucleoside 5'-triphosphate + ADP. Its activity is regulated as follows. Autophosphorylation at His-118 increases serine/threonine protein kinase activity of the enzyme. Interaction with the SET complex inhibits exonuclease activity. In terms of biological role, major role in the synthesis of nucleoside triphosphates other than ATP. Possesses nucleoside-diphosphate kinase, serine/threonine-specific protein kinase, geranyl and farnesyl pyrophosphate kinase, histidine protein kinase and 3'-5' exonuclease activities. Involved in cell proliferation, differentiation and development, signal transduction, G protein-coupled receptor endocytosis, and gene expression. Required for neural development including neural patterning and cell fate determination. This chain is Nucleoside diphosphate kinase A 2 (NME1-2), found in Bos taurus (Bovine).